The chain runs to 211 residues: Protein-methionine-sulfoxide reductase heme-binding subunit MsrQ (211 aa).

6 consecutive transmembrane segments (helical) span residues Trp10–Ile30, Phe54–Ile74, Leu82–Val102, Pro116–Thr136, Phe153–Ser173, and Ile178–Phe198.

This sequence belongs to the MsrQ family. Heterodimer of a catalytic subunit (MsrP) and a heme-binding subunit (MsrQ). FMN serves as cofactor. The cofactor is heme b.

It localises to the cell inner membrane. In terms of biological role, part of the MsrPQ system that repairs oxidized periplasmic proteins containing methionine sulfoxide residues (Met-O), using respiratory chain electrons. Thus protects these proteins from oxidative-stress damage caused by reactive species of oxygen and chlorine generated by the host defense mechanisms. MsrPQ is essential for the maintenance of envelope integrity under bleach stress, rescuing a wide series of structurally unrelated periplasmic proteins from methionine oxidation, including the primary periplasmic chaperone SurA and the lipoprotein Pal. MsrQ provides electrons for reduction to the reductase catalytic subunit MsrP, using the quinone pool of the respiratory chain. The protein is Protein-methionine-sulfoxide reductase heme-binding subunit MsrQ of Escherichia coli O6:H1 (strain CFT073 / ATCC 700928 / UPEC).